The primary structure comprises 323 residues: Alpha-tubulin N-acetyltransferase 1 (323 aa).

The 190-residue stretch at 1 to 190 (MEFPFDVDAL…NNFVIFEGFF (190 aa)) folds into the N-acetyltransferase domain. An N6-acetyllysine; by autocatalysis modification is found at K56. Residue 124 to 137 (FYIHESVQRHGHGR) participates in acetyl-CoA binding. An N6-acetyllysine; by autocatalysis modification is found at K146. 160-169 (SQKLLKFLNK) lines the acetyl-CoA pocket. Residues 196-239 (PPAPSLRATRHSRAAAVDPTPTAPARKLPPKRAEGDIKPYSSSD) form a disordered region. Residues 209–220 (AAAVDPTPTAPA) are compositionally biased toward low complexity. A compositionally biased stretch (basic and acidic residues) spans 226-239 (KRAEGDIKPYSSSD). K233 and K244 each carry N6-acetyllysine; by autocatalysis. A disordered region spans residues 252–287 (PLNRAPRRATPPAHPPPRSSSLGNSPERGPLRPFVP). Phosphoserine occurs at positions 272 and 276. At R305 the chain carries Asymmetric dimethylarginine. S315 carries the phosphoserine modification. At R323 the chain carries Omega-N-methylarginine.

Belongs to the acetyltransferase ATAT1 family. As to quaternary structure, component of the BBSome complex. Interacts with AP2 alpha-adaptins, including AP2A2, but not with AP1 gamma-adaptin (AP1G1/AP1G2); this interaction is required for efficient alpha-tubulin acetylation, hence clathrin-coated pits are sites of microtubule acetylation. In terms of processing, autoacetylation strongly increases tubulin acetylation.

The protein localises to the cytoplasm. The protein resides in the membrane. It is found in the clathrin-coated pit. It localises to the cell junction. Its subcellular location is the focal adhesion. The protein localises to the cell projection. The protein resides in the axon. It is found in the cytoskeleton. It localises to the spindle. It carries out the reaction L-lysyl-[alpha-tubulin] + acetyl-CoA = N(6)-acetyl-L-lysyl-[alpha-tubulin] + CoA + H(+). In terms of biological role, specifically acetylates 'Lys-40' in alpha-tubulin on the lumenal side of microtubules. Promotes microtubule destabilization and accelerates microtubule dynamics; this activity may be independent of acetylation activity. Acetylates alpha-tubulin with a slow enzymatic rate, due to a catalytic site that is not optimized for acetyl transfer. Enters the microtubule through each end and diffuses quickly throughout the lumen of microtubules. Acetylates only long/old microtubules because of its slow acetylation rate since it does not have time to act on dynamically unstable microtubules before the enzyme is released. Required for normal sperm flagellar function. Promotes directional cell locomotion and chemotaxis, through AP2A2-dependent acetylation of alpha-tubulin at clathrin-coated pits that are concentrated at the leading edge of migrating cells. May facilitate primary cilium assembly. This Macaca mulatta (Rhesus macaque) protein is Alpha-tubulin N-acetyltransferase 1.